The primary structure comprises 379 residues: Cytochrome b (379 aa).

Helical transmembrane passes span 34–54 (YGSLLGITLVFQIMTGIMLAM), 78–100 (WMIRFFHGNGASFFFICLYVHIG), 113–133 (TWNIGIIILLLTMATAFLGYV), and 179–199 (FFSLHFLLPFIISAMVMIHLL). His84 and His98 together coordinate heme b. Positions 183 and 197 each coordinate heme b. His202 is an a ubiquinone binding site. The next 4 membrane-spanning stretches (helical) occupy residues 225–245 (FSIKDLITMMLFIMILSFLVL), 289–309 (LGGVIALLMSIMILFFLPIFS), 320–340 (WSGMIFWSFINIIILLTWIGA), and 345–365 (APYIIFGQILSVLYFLTFFWM).

It belongs to the cytochrome b family. In terms of assembly, the main subunits of complex b-c1 are: cytochrome b, cytochrome c1 and the Rieske protein. Requires heme b as cofactor.

It is found in the mitochondrion inner membrane. Its function is as follows. Component of the ubiquinol-cytochrome c reductase complex (complex III or cytochrome b-c1 complex) that is part of the mitochondrial respiratory chain. The b-c1 complex mediates electron transfer from ubiquinol to cytochrome c. Contributes to the generation of a proton gradient across the mitochondrial membrane that is then used for ATP synthesis. This is Cytochrome b (mt:Cyt-b) from Epiperipatus biolleyi (Velvet worm).